The chain runs to 461 residues: Chromosomal replication initiator protein DnaA (461 aa).

The segment at 1–68 (MINAWAQIEH…EKAAASVLGS (68 aa)) is domain I, interacts with DnaA modulators. A domain II region spans residues 68–118 (SVPTITVVSGEEPAAAPRPVQVPAQKRPAAARTSGAEQMGLPLHYASRSAD). A domain III, AAA+ region region spans residues 119–336 (SIKWMHSFDE…SCLRNLLLKA (218 aa)). ATP contacts are provided by glycine 162, glycine 164, lysine 165, and threonine 166. Residues 337-461 (RLLNQQITMD…VERNGRIIHP (125 aa)) form a domain IV, binds dsDNA region.

The protein belongs to the DnaA family. In terms of assembly, oligomerizes as a right-handed, spiral filament on DNA at oriC.

The protein resides in the cytoplasm. Functionally, plays an essential role in the initiation and regulation of chromosomal replication. ATP-DnaA binds to the origin of replication (oriC) to initiate formation of the DNA replication initiation complex once per cell cycle. Binds the DnaA box (a 9 base pair repeat at the origin) and separates the double-stranded (ds)DNA. Forms a right-handed helical filament on oriC DNA; dsDNA binds to the exterior of the filament while single-stranded (ss)DNA is stabiized in the filament's interior. The ATP-DnaA-oriC complex binds and stabilizes one strand of the AT-rich DNA unwinding element (DUE), permitting loading of DNA polymerase. After initiation quickly degrades to an ADP-DnaA complex that is not apt for DNA replication. Binds acidic phospholipids. The chain is Chromosomal replication initiator protein DnaA from Oleidesulfovibrio alaskensis (strain ATCC BAA-1058 / DSM 17464 / G20) (Desulfovibrio alaskensis).